The primary structure comprises 2284 residues: RNA1 polyprotein (2284 aa).

Residues 567–1172 (CTAEEIFRMH…LVENYSLLLT (606 aa)) are Cytoplasmic-facing. In terms of domain architecture, SF3 helicase spans 750 to 918 (VSKLEEVHQR…DNTHFTPRAY (169 aa)). ATP is bound at residue 780-787 (GASQSGKT). Residues 1173–1193 (LVAILVLIATAYSLISTLIGL) form a helical membrane-spanning segment. Residues 1194–1216 (AGCSSFAGGMVALNHVSNASIPC) are Lumenal-facing. Serine 1217 carries the post-translational modification O-(5'-phospho-RNA)-serine. Residues 1242 to 1457 (GPAQGQGDHE…SVIPSYSSSF (216 aa)) enclose the Peptidase C3 domain. Active-site for picornain 3C-like protease activity residues include histidine 1283, glutamate 1327, and cysteine 1419. The 125-residue stretch at 1727–1851 (DVGYNCDYKG…TVSQSIMTSF (125 aa)) folds into the RdRp catalytic domain.

It belongs to the nepoviruses RNA1 polyprotein family. Specific enzymatic cleavages by picornain 3C-like protease in vivo yield mature proteins. Picornain 3C-like protease is autocatalytically processed. In terms of processing, VPg is uridylylated by the polymerase and is covalently linked to the 5'-end of genomic RNA. This uridylylated form acts as a nucleotide-peptide primer for the polymerase.

The protein localises to the host endoplasmic reticulum lumen. It localises to the host endoplasmic reticulum membrane. It carries out the reaction RNA(n) + a ribonucleoside 5'-triphosphate = RNA(n+1) + diphosphate. In terms of biological role, picornain 3C-like protease is a thiol protease that cleaves the P1 and P2 polyproteins. This Vitis vinifera (Grape) protein is RNA1 polyprotein.